Here is a 351-residue protein sequence, read N- to C-terminus: tRNA (guanine(10)-N2)-dimethyltransferase (351 aa).

The region spanning 57–165 is the THUMP domain; that stretch reads EGHRIIFRYN…ENTFFISNVL (109 aa).

Belongs to the methyltransferase superfamily. Trm-G10 family. Monomer.

It is found in the cytoplasm. It carries out the reaction guanosine(10) in tRNA + 2 S-adenosyl-L-methionine = N(2)-dimethylguanosine(10) in tRNA + 2 S-adenosyl-L-homocysteine + 2 H(+). Catalyzes the adenosylmethionine-dependent methylation of the exocyclic amino group (N(2)) of guanosine at position 10 of various tRNAs. Acts via a two-step process that leads to the formation of either N(2)-monomethyl (m(2)G) or N(2)-dimethylguanosine (m(2)(2)G). This is tRNA (guanine(10)-N2)-dimethyltransferase (trmG10) from Methanocaldococcus jannaschii (strain ATCC 43067 / DSM 2661 / JAL-1 / JCM 10045 / NBRC 100440) (Methanococcus jannaschii).